The chain runs to 75 residues: Translational regulator CsrA (75 aa).

Belongs to the CsrA/RsmA family. As to quaternary structure, homodimer; the beta-strands of each monomer intercalate to form a hydrophobic core, while the alpha-helices form wings that extend away from the core.

It is found in the cytoplasm. A translational regulator that binds mRNA to regulate translation initiation and/or mRNA stability. Usually binds in the 5'-UTR at or near the Shine-Dalgarno sequence preventing ribosome-binding, thus repressing translation. Its main target seems to be the major flagellin gene, while its function is anatagonized by FliW. The protein is Translational regulator CsrA of Alkaliphilus metalliredigens (strain QYMF).